Reading from the N-terminus, the 342-residue chain is [Citrate [pro-3S]-lyase] ligase (342 aa).

Residues 1–127 (MTLILKRVQL…RAVLMENSRE (127 aa)) enclose the N-acetyltransferase domain.

The enzyme catalyses holo-[citrate lyase ACP] + acetate + ATP = acetyl-[citrate lyase ACP] + AMP + diphosphate. Its function is as follows. Acetylation of prosthetic group (2-(5''-phosphoribosyl)-3'-dephosphocoenzyme-A) of the gamma subunit of citrate lyase. This chain is [Citrate [pro-3S]-lyase] ligase (citC), found in Klebsiella pneumoniae.